A 241-amino-acid polypeptide reads, in one-letter code: Carboxy-S-adenosyl-L-methionine synthase (241 aa).

S-adenosyl-L-methionine is bound by residues Tyr-38, 63-65, 88-89, 116-117, Asn-131, and Arg-198; these read GCS, DN, and DI.

This sequence belongs to the class I-like SAM-binding methyltransferase superfamily. Cx-SAM synthase family. As to quaternary structure, homodimer.

The catalysed reaction is prephenate + S-adenosyl-L-methionine = carboxy-S-adenosyl-L-methionine + 3-phenylpyruvate + H2O. In terms of biological role, catalyzes the conversion of S-adenosyl-L-methionine (SAM) to carboxy-S-adenosyl-L-methionine (Cx-SAM). The chain is Carboxy-S-adenosyl-L-methionine synthase from Actinobacillus pleuropneumoniae serotype 5b (strain L20).